A 363-amino-acid polypeptide reads, in one-letter code: S-methylmethionine--homocysteine S-methyltransferase BHMT2 (363 aa).

Residues 11-305 (KVILERLDSG…YHIRAIAEEL (295 aa)) form the Hcy-binding domain. Positions 208, 290, and 291 each coordinate Zn(2+).

Homotetramer. Requires Zn(2+) as cofactor.

The enzyme catalyses S-methyl-L-methionine + L-homocysteine = 2 L-methionine + H(+). The protein operates within amino-acid biosynthesis; L-methionine biosynthesis via de novo pathway; L-methionine from L-homocysteine (BhmT route): step 1/1. Its function is as follows. Involved in the regulation of homocysteine metabolism. Converts betaine and homocysteine to dimethylglycine and methionine, respectively. This reaction is also required for the irreversible oxidation of choline. This is S-methylmethionine--homocysteine S-methyltransferase BHMT2 (Bhmt2) from Rattus norvegicus (Rat).